A 617-amino-acid chain; its full sequence is Syncytin-A (617 aa).

The N-terminal stretch at 1-17 (MVRPWVFCLLLFPCSSA) is a signal peptide. The Extracellular segment spans residues 18-544 (YSDSWMPLVN…WIQWLGLGPW (527 aa)). The N-linked (GlcNAc...) asparagine glycan is linked to Asn27. The CXXC motif lies at 44–47 (CWVC). 3 disulfide bridges follow: Cys44-Cys47, Cys44-Cys505, and Cys497-Cys504. Residues Asn272 and Asn365 are each glycosylated (N-linked (GlcNAc...) asparagine). The segment at 420 to 440 (LLPLLAGLGIASALGLGIAGI) is fusion peptide. Positions 497-505 (CLFLQEECC) match the CX6CC motif. Residues 545–565 (LPSWLTSLMAPILFILVLLVF) traverse the membrane as a helical segment. The Cytoplasmic segment spans residues 566-617 (RPCLLNCLTHSVSRRMSSFIHTTTEGHVDKILLLRESQYKRLPQEPPEEDAV).

Belongs to the gamma type-C retroviral envelope protein family. The mature protein consists of a trimer of SU-TM heterodimers. The SU-TM heterodimers are attached by a labile interchain disulfide bond. Synthesized as an inactive precursor that is heavily N-glycosylated and processed likely by furin in the Golgi to yield the mature SU and TM proteins. The cleavage site between SU and TM requires the minimal sequence [KR]-X-[KR]-R. In terms of processing, the CXXC motif is highly conserved across a broad range of retroviral envelope proteins. It is thought to participate in the formation of a labile disulfide bond possibly with the CX6CC motif present in the transmembrane protein. Isomerization of the intersubunit disulfide bond to an SU intrachain disulfide bond is thought to occur upon receptor recognition in order to allow membrane fusion. In terms of tissue distribution, highly expressed in placenta where it localizes to syncytiotrophoblasts of the labyrinthine zona. Specifically localizes to syncytiotrophoblast layer I (SynT-I). Also detected at very low levels in hippocampus, brain, testis and ovary.

The protein localises to the cell membrane. In terms of biological role, this endogenous retroviral envelope protein has retained its original fusogenic properties. Together with Synb, participates in trophoblast fusion and the formation of a syncytium during placenta morphogenesis. Syna is essential for placental development and is specifically required for formation of syncytiotrophoblast layer I (SynT-I). Promotes muscle myoblast fusion. Does not have immunosuppressive activity. The sequence is that of Syncytin-A from Mus musculus (Mouse).